Consider the following 264-residue polypeptide: Synaptophysin-like protein 2 (264 aa).

Topologically, residues 1–33 are cytoplasmic; sequence MSSTESPGRTSDKSPRQQVDRLLLGLRWQRLEE. Residues 30-238 enclose the MARVEL domain; that stretch reads RLEEPLGFIK…NCWFVFKETP (209 aa). Residues 34-54 form a helical membrane-spanning segment; that stretch reads PLGFIKVLQWLFAIFAFGSCG. The Vesicular segment spans residues 55-116; it reads SYSGETGALV…LMGDFSAPAE (62 aa). A helical membrane pass occupies residues 117–137; the sequence is FFVTLGIFSFFYTMAALVIYL. The Cytoplasmic portion of the chain corresponds to 138-150; sequence RFHKLYTENKRFP. The chain crosses the membrane as a helical span at residues 151–171; the sequence is LVDFCVTVSFTFFWLVAAAAW. At 172 to 213 the chain is on the vesicular side; the sequence is GKGLTDVKGATRPSSLTAAMSVCHGEEAVCSAGATPSMGLAN. N213 carries N-linked (GlcNAc...) asparagine glycosylation. A helical membrane pass occupies residues 214 to 234; that stretch reads LSVLFGFINFFLWAGNCWFVF. The Cytoplasmic segment spans residues 235–264; that stretch reads KETPWHGQGQDQGQGPSQESAAEQGAVEKQ. Residues 242–264 form a disordered region; it reads QGQDQGQGPSQESAAEQGAVEKQ.

It belongs to the synaptophysin/synaptobrevin family. As to expression, expressed abundantly in skeletal muscle and at lower levels in the kidney.

The protein resides in the membrane. Functionally, involved in communication between the T-tubular and junctional sarcoplasmic reticulum (SR) membranes. This is Synaptophysin-like protein 2 (Sypl2) from Mus musculus (Mouse).